Consider the following 413-residue polypeptide: Glucose-1-phosphate adenylyltransferase (413 aa).

Residues glycine 161, 176–177 (EK), and serine 195 contribute to the alpha-D-glucose 1-phosphate site.

This sequence belongs to the bacterial/plant glucose-1-phosphate adenylyltransferase family. Homotetramer.

It catalyses the reaction alpha-D-glucose 1-phosphate + ATP + H(+) = ADP-alpha-D-glucose + diphosphate. It participates in glycan biosynthesis; glycogen biosynthesis. Involved in the biosynthesis of ADP-glucose, a building block required for the elongation reactions to produce glycogen. Catalyzes the reaction between ATP and alpha-D-glucose 1-phosphate (G1P) to produce pyrophosphate and ADP-Glc. This Anaeromyxobacter dehalogenans (strain 2CP-C) protein is Glucose-1-phosphate adenylyltransferase.